Consider the following 345-residue polypeptide: Anthranilate phosphoribosyltransferase (345 aa).

5-phospho-alpha-D-ribose 1-diphosphate-binding positions include glycine 80, 83–84 (GD), threonine 88, 90–93 (NIST), 108–116 (KHGNRSVSS), and serine 120. Glycine 80 serves as a coordination point for anthranilate. A Mg(2+)-binding site is contributed by serine 92. Asparagine 111 serves as a coordination point for anthranilate. An anthranilate-binding site is contributed by arginine 166. Residues aspartate 225 and glutamate 226 each contribute to the Mg(2+) site.

Belongs to the anthranilate phosphoribosyltransferase family. In terms of assembly, homodimer. The cofactor is Mg(2+).

It carries out the reaction N-(5-phospho-beta-D-ribosyl)anthranilate + diphosphate = 5-phospho-alpha-D-ribose 1-diphosphate + anthranilate. It participates in amino-acid biosynthesis; L-tryptophan biosynthesis; L-tryptophan from chorismate: step 2/5. Functionally, catalyzes the transfer of the phosphoribosyl group of 5-phosphorylribose-1-pyrophosphate (PRPP) to anthranilate to yield N-(5'-phosphoribosyl)-anthranilate (PRA). The chain is Anthranilate phosphoribosyltransferase from Desulforamulus reducens (strain ATCC BAA-1160 / DSM 100696 / MI-1) (Desulfotomaculum reducens).